Reading from the N-terminus, the 229-residue chain is ATP synthase subunit a (229 aa).

Helical transmembrane passes span 25–45 (ADAI…SLIA), 86–106 (IATL…PGFF), 111–131 (NLNT…IVGI), 142–162 (FMGP…IGHL), 181–201 (LVLM…MMLM), and 202–222 (GVLV…IYIQ).

Belongs to the ATPase A chain family. As to quaternary structure, F-type ATPases have 2 components, CF(1) - the catalytic core - and CF(0) - the membrane proton channel. CF(1) has five subunits: alpha(3), beta(3), gamma(1), delta(1), epsilon(1). CF(0) has three main subunits: a(1), b(2) and c(9-12). The alpha and beta chains form an alternating ring which encloses part of the gamma chain. CF(1) is attached to CF(0) by a central stalk formed by the gamma and epsilon chains, while a peripheral stalk is formed by the delta and b chains.

Its subcellular location is the cell inner membrane. In terms of biological role, key component of the proton channel; it plays a direct role in the translocation of protons across the membrane. The polypeptide is ATP synthase subunit a (Geobacter sulfurreducens (strain ATCC 51573 / DSM 12127 / PCA)).